We begin with the raw amino-acid sequence, 400 residues long: Acetate kinase (400 aa).

Asn-10 is a Mg(2+) binding site. Residue Lys-17 coordinates ATP. Arg-91 lines the substrate pocket. The active-site Proton donor/acceptor is the Asp-150. ATP-binding positions include 210–214 (HLGNG), 285–287 (DCR), and 333–337 (GIGEN). Glu-387 lines the Mg(2+) pocket.

The protein belongs to the acetokinase family. As to quaternary structure, homodimer. Mg(2+) serves as cofactor. Requires Mn(2+) as cofactor.

The protein localises to the cytoplasm. The catalysed reaction is acetate + ATP = acetyl phosphate + ADP. It functions in the pathway metabolic intermediate biosynthesis; acetyl-CoA biosynthesis; acetyl-CoA from acetate: step 1/2. Its function is as follows. Catalyzes the formation of acetyl phosphate from acetate and ATP. Can also catalyze the reverse reaction. This is Acetate kinase from Cronobacter sakazakii (strain ATCC BAA-894) (Enterobacter sakazakii).